A 284-amino-acid chain; its full sequence is MEMO1 family protein STK_20620 (284 aa).

This sequence belongs to the MEMO1 family.

In Sulfurisphaera tokodaii (strain DSM 16993 / JCM 10545 / NBRC 100140 / 7) (Sulfolobus tokodaii), this protein is MEMO1 family protein STK_20620.